Consider the following 300-residue polypeptide: Dihydroorotate dehydrogenase B (NAD(+)), catalytic subunit (300 aa).

FMN-binding positions include serine 20 and 44–45 (KS). Residues lysine 44, 68-72 (NAMGL), and asparagine 122 contribute to the substrate site. FMN is bound at residue asparagine 122. Catalysis depends on cysteine 125, which acts as the Nucleophile. FMN is bound by residues lysine 160 and isoleucine 186. 187–188 (NT) serves as a coordination point for substrate. Residues glycine 212, 238–239 (GG), and 260–261 (GT) contribute to the FMN site.

This sequence belongs to the dihydroorotate dehydrogenase family. Type 1 subfamily. As to quaternary structure, heterotetramer of 2 PyrK and 2 PyrD type B subunits. Requires FMN as cofactor.

The protein resides in the cytoplasm. The catalysed reaction is (S)-dihydroorotate + NAD(+) = orotate + NADH + H(+). Its pathway is pyrimidine metabolism; UMP biosynthesis via de novo pathway; orotate from (S)-dihydroorotate (NAD(+) route): step 1/1. Catalyzes the conversion of dihydroorotate to orotate with NAD(+) as electron acceptor. This is Dihydroorotate dehydrogenase B (NAD(+)), catalytic subunit (pyrD) from Pyrococcus furiosus (strain ATCC 43587 / DSM 3638 / JCM 8422 / Vc1).